The primary structure comprises 182 residues: Large ribosomal subunit protein uL5 (182 aa).

The protein belongs to the universal ribosomal protein uL5 family. As to quaternary structure, part of the 50S ribosomal subunit; part of the 5S rRNA/L5/L18/L25 subcomplex. Contacts the 5S rRNA and the P site tRNA. Forms a bridge to the 30S subunit in the 70S ribosome.

In terms of biological role, this is one of the proteins that bind and probably mediate the attachment of the 5S RNA into the large ribosomal subunit, where it forms part of the central protuberance. In the 70S ribosome it contacts protein S13 of the 30S subunit (bridge B1b), connecting the 2 subunits; this bridge is implicated in subunit movement. Contacts the P site tRNA; the 5S rRNA and some of its associated proteins might help stabilize positioning of ribosome-bound tRNAs. The protein is Large ribosomal subunit protein uL5 of Thermosipho melanesiensis (strain DSM 12029 / CIP 104789 / BI429).